A 50-amino-acid chain; its full sequence is Bacteriocin BacSp222 (50 aa).

Position 1 is an N-formylmethionine (Met-1).

The protein localises to the secreted. Functionally, has bacteriolytic activity against Gram-positive bacteria B.subtilis, L.lactis and M.luteus and several species from genus Staphylococcus including methicillin-resistant S.aureus, with MIC values ranging from 0.11 uM to 7.8 uM. Has no activity against Gram-negative bacteria or fungi. In vitro, has a dose-dependent cytolytic effect on eukaryotic cells. This is Bacteriocin BacSp222 from Staphylococcus pseudintermedius.